We begin with the raw amino-acid sequence, 129 residues long: Replication initiation control protein YabA (129 aa).

Residues H103, C105, C119, and C122 each contribute to the Zn(2+) site.

Belongs to the YabA family. Homotetramer. Interacts with both DnaA and DnaN, acting as a bridge between these two proteins. Zn(2+) serves as cofactor.

It localises to the cytoplasm. It is found in the nucleoid. Functionally, involved in control of chromosome replication initiation. Inhibits the cooperative binding of DnaA to the oriC region, thus negatively regulating initiation of chromosome replication. Inhibits the ability of DnaA-ATP to form a helix on DNA; does not disassemble preformed DnaA-DNA helices. Decreases the residence time of DnaA on the chromosome at its binding sites (oriC, replication forks and promoter-binding sites). Tethers DnaA to the replication machinery via the DNA polymerase beta sliding clamp subunit (dnaN). Associates with oriC and other DnaA targets on the chromosome in a DnaA-dependent manner. This Listeria monocytogenes serotype 4b (strain CLIP80459) protein is Replication initiation control protein YabA.